The chain runs to 130 residues: Odontogenesis associated phosphoprotein (130 aa).

A signal peptide spans 1–23; it reads MARRHCFSYWLLVCWLVVTVAEG.

Highly expressed in placenta.

It localises to the secreted. Functionally, may promote nucleation of hydroxyapatite. This Homo sapiens (Human) protein is Odontogenesis associated phosphoprotein.